The following is a 918-amino-acid chain: Valine--tRNA ligase (918 aa).

The short motif at 50-60 (PNVTGSLHMGH) is the 'HIGH' region element. Residues 548–552 (KMSKS) carry the 'KMSKS' region motif. Lysine 551 contacts ATP. Residues 849 to 883 (NDFVNLEALKDRLTKDLKKVNSDIETLNKRISNKN) are a coiled coil.

Belongs to the class-I aminoacyl-tRNA synthetase family. ValS type 1 subfamily. As to quaternary structure, monomer.

The protein resides in the cytoplasm. The enzyme catalyses tRNA(Val) + L-valine + ATP = L-valyl-tRNA(Val) + AMP + diphosphate. Catalyzes the attachment of valine to tRNA(Val). As ValRS can inadvertently accommodate and process structurally similar amino acids such as threonine, to avoid such errors, it has a 'posttransfer' editing activity that hydrolyzes mischarged Thr-tRNA(Val) in a tRNA-dependent manner. The protein is Valine--tRNA ligase of Prochlorococcus marinus subsp. pastoris (strain CCMP1986 / NIES-2087 / MED4).